Reading from the N-terminus, the 428-residue chain is Zinc metalloproteinase nas-27 (428 aa).

The signal sequence occupies residues 1-17 (MQILPIFFPLLITSLHA). Positions 18-57 (IPRGRRAVRNRNEGDINSLVGVGQYLYQGDIAVVKSRARR) are excised as a propeptide. The Peptidase M12A domain maps to 58 to 255 (AVIRQKHKKW…SRMNVLYNCH (198 aa)). 6 disulfide bridges follow: Cys99-Cys254, Cys120-Cys141, Cys258-Cys276, Cys281-Cys290, Cys306-Cys339, and Cys366-Cys386. His150 serves as a coordination point for Zn(2+). The active site involves Glu151. Zn(2+) contacts are provided by His154 and His160. Residue Asn181 is glycosylated (N-linked (GlcNAc...) asparagine). The EGF-like domain occupies 250–291 (VLYNCHERCANTLNRCQQGGYPAPSDCSQCVCPDGFGGNFCE). The CUB domain occupies 306–428 (CGGVLWASET…LDFNIEYRAV (123 aa)). Asn377 carries an N-linked (GlcNAc...) asparagine glycan.

Zn(2+) is required as a cofactor.

It is found in the secreted. Functionally, metalloprotease. The sequence is that of Zinc metalloproteinase nas-27 (nas-27) from Caenorhabditis elegans.